Here is a 189-residue protein sequence, read N- to C-terminus: Interferon alpha-10 (189 aa).

A signal peptide spans 1 to 23 (MALSFSLLMAVLVLSYKSICSLG). Intrachain disulfides connect cysteine 24-cysteine 122 and cysteine 52-cysteine 162.

This sequence belongs to the alpha/beta interferon family.

Its subcellular location is the secreted. Produced by macrophages, IFN-alpha have antiviral activities. Interferon stimulates the production of two enzymes: a protein kinase and an oligoadenylate synthetase. The sequence is that of Interferon alpha-10 (IFNA10) from Homo sapiens (Human).